A 267-amino-acid polypeptide reads, in one-letter code: 2-keto-3-deoxy-L-rhamnonate aldolase (267 aa).

Histidine 49 functions as the Proton acceptor in the catalytic mechanism. Glutamine 151 provides a ligand contact to substrate. Glutamate 153 provides a ligand contact to Mg(2+). Residues alanine 178 and aspartate 179 each coordinate substrate. Aspartate 179 contacts Mg(2+).

Belongs to the HpcH/HpaI aldolase family. KDR aldolase subfamily. Homohexamer. Mg(2+) is required as a cofactor.

The catalysed reaction is 2-dehydro-3-deoxy-L-rhamnonate = (S)-lactaldehyde + pyruvate. In terms of biological role, catalyzes the reversible retro-aldol cleavage of 2-keto-3-deoxy-L-rhamnonate (KDR) to pyruvate and lactaldehyde. The protein is 2-keto-3-deoxy-L-rhamnonate aldolase of Klebsiella pneumoniae subsp. pneumoniae (strain ATCC 700721 / MGH 78578).